A 202-amino-acid polypeptide reads, in one-letter code: Stress enhanced protein 2, chloroplastic (202 aa).

The transit peptide at 1 to 60 directs the protein to the chloroplast; it reads MAMATRAIRYQLPSPRFRAPRCESSEPIKQIQIQQRPRGGDLAENGKIVLQPRLCTLRSY. Helical transmembrane passes span 111–131 and 142–162; these read LAMI…NSLF and AIGA…LTIS.

This sequence belongs to the ELIP/psbS family.

The protein resides in the plastid. It is found in the chloroplast thylakoid membrane. In terms of biological role, may be involved in non-photochemical quenching, a process that maintains the balance between dissipation and utilization of light energy to minimize generation of oxidizing molecules, thereby protecting the plant against photo-oxidative damage. May play a photoprotective role in the thylakoid membrane in response to light stress. In Arabidopsis thaliana (Mouse-ear cress), this protein is Stress enhanced protein 2, chloroplastic.